Here is a 347-residue protein sequence, read N- to C-terminus: MKNDIFLKSLKKEPIARYPVWLMRQAGRYLPEYRAIRQKYKSFLDFCKNVEDAAIVSLQPVDILGVDAVIMFSDILVLLEPMGIKVSFEAGEGPVLDHNFDFKNLKSQGISGDLSYVFELLKVLKEKSPVPVIGFCGAPFTLASYVIEKESSRDFTKTKVFMYENQKDFHILMEKLSEALVEYIDHQIKSGADVIQIFDSWSMSLSRFAYKEYVYDYNAFIIKSIKQKHPNTPIIYFFRGSSSHIEDAVDLGADALSVDWSVCINDVCKRYPDLVFQGNLEPQILLLDKENIRKHVEEFVMCIPRDTAFVVNLGHGITPDVSKDNVKYFVECVKEVSYGKRNLFKKC.

Substrate is bound by residues 24-28 (RQAGR), D74, Y145, S200, and H315.

It belongs to the uroporphyrinogen decarboxylase family. Homodimer.

The protein localises to the cytoplasm. The catalysed reaction is uroporphyrinogen III + 4 H(+) = coproporphyrinogen III + 4 CO2. It participates in porphyrin-containing compound metabolism; protoporphyrin-IX biosynthesis; coproporphyrinogen-III from 5-aminolevulinate: step 4/4. In terms of biological role, catalyzes the decarboxylation of four acetate groups of uroporphyrinogen-III to yield coproporphyrinogen-III. The polypeptide is Uroporphyrinogen decarboxylase (Hydrogenobaculum sp. (strain Y04AAS1)).